A 205-amino-acid chain; its full sequence is Protein TK0174 (205 aa).

The region spanning 7-201 (EWGEFLVRLA…EEYPRGPVRR (195 aa)) is the AMMECR1 domain.

This chain is Protein TK0174, found in Thermococcus kodakarensis (strain ATCC BAA-918 / JCM 12380 / KOD1) (Pyrococcus kodakaraensis (strain KOD1)).